We begin with the raw amino-acid sequence, 331 residues long: Fructose-1,6-bisphosphatase class 1 (331 aa).

Positions 100, 120, 122, and 123 each coordinate Mg(2+). Substrate-binding positions include 123 to 126 (DGSS), Asn-216, Tyr-243, 261 to 263 (YLY), and Lys-273. Glu-279 contacts Mg(2+).

Belongs to the FBPase class 1 family. As to quaternary structure, homotetramer. Mg(2+) serves as cofactor.

Its subcellular location is the cytoplasm. It carries out the reaction beta-D-fructose 1,6-bisphosphate + H2O = beta-D-fructose 6-phosphate + phosphate. It participates in carbohydrate biosynthesis; gluconeogenesis. The chain is Fructose-1,6-bisphosphatase class 1 from Amoebophilus asiaticus (strain 5a2).